Reading from the N-terminus, the 365-residue chain is Patr class I histocompatibility antigen, A-108 alpha chain (365 aa).

The first 24 residues, 1–24, serve as a signal peptide directing secretion; that stretch reads MAVMPPRTLLLLLSGALALTQTWA. The segment at 25–114 is alpha-1; that stretch reads GSHSMRYFYT…LRGYYNQSED (90 aa). Over 25–308 the chain is Extracellular; the sequence is GSHSMRYFYT…EPSSQPTIPI (284 aa). A glycan (N-linked (GlcNAc...) asparagine) is linked at asparagine 110. The interval 115-206 is alpha-2; the sequence is GSHTIQIMYG…ENGKETLQRT (92 aa). Disulfide bonds link cysteine 125-cysteine 188 and cysteine 227-cysteine 283. An alpha-3 region spans residues 207–298; the sequence is DPPKTHMTHH…GLPKPLTLRW (92 aa). The 87-residue stretch at 209 to 295 folds into the Ig-like C1-type domain; the sequence is PKTHMTHHPI…QHEGLPKPLT (87 aa). The segment at 299–308 is connecting peptide; sequence EPSSQPTIPI. The helical transmembrane segment at 309–332 threads the bilayer; sequence VGIIAGLVLLGAVITGAVVAAVMW. Topologically, residues 333-365 are cytoplasmic; the sequence is RRKSSDRKGGSYTQAASSDSAQGSDVSLTACKV. Residues 339–360 are disordered; it reads RKGGSYTQAASSDSAQGSDVSL. Serine 343 carries the post-translational modification Phosphoserine. At tyrosine 344 the chain carries Phosphotyrosine. Over residues 346-359 the composition is skewed to low complexity; the sequence is QAASSDSAQGSDVS. Serine 349, serine 350, serine 352, serine 356, and serine 359 each carry phosphoserine.

Belongs to the MHC class I family. As to quaternary structure, heterodimer of an alpha chain and a beta chain (beta-2-microglobulin).

The protein resides in the membrane. Its function is as follows. Involved in the presentation of foreign antigens to the immune system. The protein is Patr class I histocompatibility antigen, A-108 alpha chain (Patr-A) of Pan troglodytes (Chimpanzee).